The chain runs to 85 residues: Putative membrane protein insertion efficiency factor (85 aa).

Belongs to the UPF0161 family.

It localises to the cell inner membrane. In terms of biological role, could be involved in insertion of integral membrane proteins into the membrane. This Fervidobacterium nodosum (strain ATCC 35602 / DSM 5306 / Rt17-B1) protein is Putative membrane protein insertion efficiency factor.